Here is a 288-residue protein sequence, read N- to C-terminus: Ribosomal RNA small subunit methyltransferase A (288 aa).

N18, L20, G45, E66, D91, and N118 together coordinate S-adenosyl-L-methionine.

The protein belongs to the class I-like SAM-binding methyltransferase superfamily. rRNA adenine N(6)-methyltransferase family. RsmA subfamily.

The protein localises to the cytoplasm. It catalyses the reaction adenosine(1518)/adenosine(1519) in 16S rRNA + 4 S-adenosyl-L-methionine = N(6)-dimethyladenosine(1518)/N(6)-dimethyladenosine(1519) in 16S rRNA + 4 S-adenosyl-L-homocysteine + 4 H(+). In terms of biological role, specifically dimethylates two adjacent adenosines (A1518 and A1519) in the loop of a conserved hairpin near the 3'-end of 16S rRNA in the 30S particle. May play a critical role in biogenesis of 30S subunits. This chain is Ribosomal RNA small subunit methyltransferase A, found in Pasteurella multocida (strain Pm70).